The sequence spans 276 residues: MLMITSFANPRVAQAFVDYMATQGVILTIQQHHQSDVWLADESQAERVRAELARFLENPADPRYLAASWQSGHTGSGLHYRRFPFIATLRERAGPVTWLIMIACILVFVVMSIVGAQSVMVWLAWPFDPSLKFEFWRYFTHAFMHFSLMHILFNLLWWWYIGGAVEKRLGSGKLIVITVISALLSGYVQQKFSGPWFGGLSGVVYALMGYAWLRGERDPQSGIYLQRGLIAFALIWIVAGWFDVFGMSMANGAHIAGLAVGLAMAFADTVNARKRT.

The next 6 helical transmembrane spans lie at 96 to 116 (VTWL…IVGA), 142 to 162 (AFMH…WYIG), 169 to 189 (LGSG…GYVQ), 192 to 212 (FSGP…GYAW), 229 to 249 (LIAF…GMSM), and 250 to 270 (ANGA…ADTV). Serine 201 (nucleophile) is an active-site residue. Residue histidine 254 is part of the active site.

The protein belongs to the peptidase S54 family.

It is found in the cell inner membrane. It catalyses the reaction Cleaves type-1 transmembrane domains using a catalytic dyad composed of serine and histidine that are contributed by different transmembrane domains.. In terms of biological role, rhomboid-type serine protease that catalyzes intramembrane proteolysis. This Citrobacter koseri (strain ATCC BAA-895 / CDC 4225-83 / SGSC4696) protein is Rhomboid protease GlpG.